A 186-amino-acid polypeptide reads, in one-letter code: ADP-ribosylation factor-like protein 6 (186 aa).

Gly2 carries the N-myristoyl glycine lipid modification. GTP-binding positions include 24–31 (GLDNSGKT), 69–73 (DMSGQ), and 130–133 (NKMD).

Belongs to the small GTPase superfamily. Arf family. In terms of assembly, interacts with SEC61B, ARL6IP1, ARL6IP2, ARL6IP3, ARL6IP4 ARL6IP5 and ARL6IP6. Interacts (GTP-bound form) with the BBSome a complex that contains BBS1, BBS2, BBS4, BBS5, BBS7, BBS8/TTC8, BBS9 and BBIP10. Interacts (GTP-free form) with IFT27.

The protein localises to the cell projection. It localises to the cilium membrane. Its subcellular location is the cytoplasm. The protein resides in the cytoskeleton. It is found in the cilium axoneme. The protein localises to the cilium basal body. In terms of biological role, involved in membrane protein trafficking at the base of the ciliary organelle. Mediates recruitment onto plasma membrane of the BBSome complex which would constitute a coat complex required for sorting of specific membrane proteins to the primary cilia. Together with the BBSome complex and LTZL1, controls SMO ciliary trafficking and contributes to the sonic hedgehog (SHH) pathway regulation. May regulate cilia assembly and disassembly and subsequent ciliary signaling events such as the Wnt signaling cascade. Isoform 2 may be required for proper retinal function and organization. This is ADP-ribosylation factor-like protein 6 (ARL6) from Bos taurus (Bovine).